Consider the following 535-residue polypeptide: Methylmalonate-semialdehyde/malonate-semialdehyde dehydrogenase [acylating], mitochondrial (535 aa).

The N-terminal 32 residues, 1 to 32 (MAAAVAAAAAVRSRILQVSSKVNSTWYPASSF), are a transit peptide targeting the mitochondrion. 4 positions are modified to N6-acetyllysine; alternate: Lys47, Lys52, Lys55, and Lys76. An N6-succinyllysine; alternate mark is found at Lys47, Lys52, Lys55, and Lys76. Lys87 bears the N6-acetyllysine mark. N6-acetyllysine; alternate occurs at positions 117 and 129. Residues Lys117 and Lys129 each carry the N6-succinyllysine; alternate modification. Ala183, Phe185, Lys209, Glu212, Arg213, and Ser262 together coordinate NAD(+). Ser262 carries the phosphoserine modification. At Lys298 the chain carries N6-acetyllysine. The active-site Nucleophile is Cys317. Residues Lys330 and Lys331 each carry the N6-acetyllysine modification. An N6-acetyllysine; alternate mark is found at Lys364 and Lys376. Lys364 and Lys376 each carry N6-succinyllysine; alternate. At Ser380 the chain carries Phosphoserine. The residue at position 391 (Lys391) is an N6-succinyllysine. Glu417 lines the NAD(+) pocket. The residue at position 500 (Lys500) is an N6-acetyllysine. Lys517 is subject to N6-succinyllysine.

The protein belongs to the aldehyde dehydrogenase family. In terms of assembly, homotetramer. As to expression, expressed in the head and flagellum of epididymal sperm but not in testicular sperm (at protein level). Kidney &gt; liver &gt; heart &gt; muscle &gt; brain.

The protein resides in the mitochondrion. The enzyme catalyses 3-oxopropanoate + NAD(+) + CoA + H2O = hydrogencarbonate + acetyl-CoA + NADH + H(+). It catalyses the reaction 2-methyl-3-oxopropanoate + NAD(+) + CoA + H2O = propanoyl-CoA + hydrogencarbonate + NADH + H(+). The catalysed reaction is (R)-2-methyl-3-oxopropanoate + NAD(+) + CoA + H2O = propanoyl-CoA + hydrogencarbonate + NADH + H(+). It carries out the reaction (S)-2-methyl-3-oxopropanoate + NAD(+) + CoA + H2O = propanoyl-CoA + hydrogencarbonate + NADH + H(+). In terms of biological role, malonate and methylmalonate semialdehyde dehydrogenase involved in the catabolism of valine, thymine, and compounds catabolized by way of beta-alanine, including uracil and cytidine. This is Methylmalonate-semialdehyde/malonate-semialdehyde dehydrogenase [acylating], mitochondrial from Rattus norvegicus (Rat).